A 188-amino-acid chain; its full sequence is Crossover junction endodeoxyribonuclease RuvC (188 aa).

Active-site residues include Asp7, Glu68, and Asp141. Mg(2+) is bound by residues Asp7, Glu68, and Asp141.

The protein belongs to the RuvC family. Homodimer which binds Holliday junction (HJ) DNA. The HJ becomes 2-fold symmetrical on binding to RuvC with unstacked arms; it has a different conformation from HJ DNA in complex with RuvA. In the full resolvosome a probable DNA-RuvA(4)-RuvB(12)-RuvC(2) complex forms which resolves the HJ. It depends on Mg(2+) as a cofactor.

It localises to the cytoplasm. It carries out the reaction Endonucleolytic cleavage at a junction such as a reciprocal single-stranded crossover between two homologous DNA duplexes (Holliday junction).. Functionally, the RuvA-RuvB-RuvC complex processes Holliday junction (HJ) DNA during genetic recombination and DNA repair. Endonuclease that resolves HJ intermediates. Cleaves cruciform DNA by making single-stranded nicks across the HJ at symmetrical positions within the homologous arms, yielding a 5'-phosphate and a 3'-hydroxyl group; requires a central core of homology in the junction. The consensus cleavage sequence is 5'-(A/T)TT(C/G)-3'. Cleavage occurs on the 3'-side of the TT dinucleotide at the point of strand exchange. HJ branch migration catalyzed by RuvA-RuvB allows RuvC to scan DNA until it finds its consensus sequence, where it cleaves and resolves the cruciform DNA. The polypeptide is Crossover junction endodeoxyribonuclease RuvC (Streptomyces coelicolor (strain ATCC BAA-471 / A3(2) / M145)).